A 101-amino-acid polypeptide reads, in one-letter code: Interleukin-8 (101 aa).

The first 22 residues, 1–22, serve as a signal peptide directing secretion; the sequence is MTSKLAIALLAAFLLSAALCKA. Arginine 27 carries the citrulline modification. Intrachain disulfides connect cysteine 34/cysteine 61 and cysteine 36/cysteine 77.

The protein belongs to the intercrine alpha (chemokine CxC) family. As to quaternary structure, homodimer. Post-translationally, citrullination at Arg-27 prevents proteolysis, and dampens tissue inflammation, it also enhances leukocytosis, possibly through impaired chemokine clearance from the blood circulation.

Its subcellular location is the secreted. Chemotactic factor that mediates inflammatory response by attracting neutrophils, basophils, and T-cells to clear pathogens and protect the host from infection. Also plays an important role in neutrophil activation. Released in response to an inflammatory stimulus, exerts its effect by binding to the G-protein-coupled receptors CXCR1 and CXCR2, primarily found in neutrophils, monocytes and endothelial cells. G-protein heterotrimer (alpha, beta, gamma subunits) constitutively binds to CXCR1/CXCR2 receptor and activation by IL8 leads to beta and gamma subunits release from Galpha (GNAI2 in neutrophils) and activation of several downstream signaling pathways including PI3K and MAPK pathways. The protein is Interleukin-8 (CXCL8) of Tursiops truncatus (Atlantic bottle-nosed dolphin).